Here is a 199-residue protein sequence, read N- to C-terminus: MSDFQKSFSESTSSIKFDEKYIDNSVQPNDIGVADQWAVKTVDDPCVGNLATPVNSGYFTKAFINNLPFYREGISPNFRGLETGAAFGYLLYGPFTMTGPLRNSEFAVTAGLLSAIGAVHIMTALLVLYNAPGKAPNVQPPDATVNNPPKDLFTRAGWADFTSGFWLGGCGGAVFAWLLVGTLHLDTLMPIIKNIWTAG.

2 helical membrane-spanning segments follow: residues valine 108–leucine 128 and phenylalanine 165–leucine 185.

Belongs to the PsaL family.

The protein resides in the cellular thylakoid membrane. This chain is Photosystem I reaction center subunit XI, found in Prochlorococcus marinus (strain MIT 9215).